The chain runs to 255 residues: Hydroxyacylglutathione hydrolase (255 aa).

Zn(2+) contacts are provided by His56, His58, Asp60, His61, His114, Asp133, and His171.

It belongs to the metallo-beta-lactamase superfamily. Glyoxalase II family. As to quaternary structure, monomer. The cofactor is Zn(2+).

It catalyses the reaction an S-(2-hydroxyacyl)glutathione + H2O = a 2-hydroxy carboxylate + glutathione + H(+). Its pathway is secondary metabolite metabolism; methylglyoxal degradation; (R)-lactate from methylglyoxal: step 2/2. Thiolesterase that catalyzes the hydrolysis of S-D-lactoyl-glutathione to form glutathione and D-lactic acid. This Fuscovulum blasticum (Rhodobacter blasticus) protein is Hydroxyacylglutathione hydrolase.